Consider the following 157-residue polypeptide: S-ribosylhomocysteine lyase (157 aa).

The Fe cation site is built by His54, His58, and Cys124.

This sequence belongs to the LuxS family. In terms of assembly, homodimer. Requires Fe cation as cofactor.

It carries out the reaction S-(5-deoxy-D-ribos-5-yl)-L-homocysteine = (S)-4,5-dihydroxypentane-2,3-dione + L-homocysteine. Involved in the synthesis of autoinducer 2 (AI-2) which is secreted by bacteria and is used to communicate both the cell density and the metabolic potential of the environment. The regulation of gene expression in response to changes in cell density is called quorum sensing. Catalyzes the transformation of S-ribosylhomocysteine (RHC) to homocysteine (HC) and 4,5-dihydroxy-2,3-pentadione (DPD). In Lacticaseibacillus paracasei (strain ATCC 334 / BCRC 17002 / CCUG 31169 / CIP 107868 / KCTC 3260 / NRRL B-441) (Lactobacillus paracasei), this protein is S-ribosylhomocysteine lyase.